A 232-amino-acid polypeptide reads, in one-letter code: Triosephosphate isomerase (232 aa).

6–8 (NLK) is a substrate binding site. His91 acts as the Electrophile in catalysis. Glu158 serves as the catalytic Proton acceptor. Residues Gly164 and Ser194 each coordinate substrate.

This sequence belongs to the triosephosphate isomerase family. As to quaternary structure, homodimer.

The protein resides in the cytoplasm. It catalyses the reaction D-glyceraldehyde 3-phosphate = dihydroxyacetone phosphate. The protein operates within carbohydrate biosynthesis; gluconeogenesis. Its pathway is carbohydrate degradation; glycolysis; D-glyceraldehyde 3-phosphate from glycerone phosphate: step 1/1. Involved in the gluconeogenesis. Catalyzes stereospecifically the conversion of dihydroxyacetone phosphate (DHAP) to D-glyceraldehyde-3-phosphate (G3P). In Campylobacter hominis (strain ATCC BAA-381 / DSM 21671 / CCUG 45161 / LMG 19568 / NCTC 13146 / CH001A), this protein is Triosephosphate isomerase.